Here is a 225-residue protein sequence, read N- to C-terminus: tRNA (guanine-N(1)-)-methyltransferase (225 aa).

S-adenosyl-L-methionine contacts are provided by residues Gly112 and 132–137; that span reads IGDYVL.

The protein belongs to the RNA methyltransferase TrmD family. Homodimer.

It localises to the cytoplasm. The catalysed reaction is guanosine(37) in tRNA + S-adenosyl-L-methionine = N(1)-methylguanosine(37) in tRNA + S-adenosyl-L-homocysteine + H(+). Specifically methylates guanosine-37 in various tRNAs. The chain is tRNA (guanine-N(1)-)-methyltransferase from Porphyromonas gingivalis (strain ATCC 33277 / DSM 20709 / CIP 103683 / JCM 12257 / NCTC 11834 / 2561).